We begin with the raw amino-acid sequence, 222 residues long: Glutathione S-transferase A3 (222 aa).

Residue alanine 2 is modified to N-acetylalanine. The 81-residue stretch at 3–83 folds into the GST N-terminal domain; that stretch reads GKPKLHYFNG…YIASKYNLYG (81 aa). Lysine 4 is modified (N6-succinyllysine). Glutathione-binding positions include tyrosine 9, arginine 45, 54-55, and 67-68; these read QV and QT. One can recognise a GST C-terminal domain in the interval 85–207; the sequence is DIKERALIDM…LQPGSPRKPP (123 aa).

This sequence belongs to the GST superfamily. Alpha family. In terms of assembly, homodimer.

It localises to the cytoplasm. It catalyses the reaction RX + glutathione = an S-substituted glutathione + a halide anion + H(+). The catalysed reaction is androst-5-ene-3,17-dione = androst-4-ene-3,17-dione. The enzyme catalyses pregn-5-ene-3,20-dione = progesterone. Its function is as follows. Conjugation of reduced glutathione to a wide number of exogenous and endogenous hydrophobic electrophiles. Catalyzes isomerization reactions that contribute to the biosynthesis of steroid hormones. Efficiently catalyze obligatory double-bond isomerizations of delta(5)-androstene-3,17-dione and delta(5)-pregnene-3,20-dione, precursors to testosterone and progesterone, respectively. Has substantial activity toward aflatoxin B1-8,9-epoxide. This is Glutathione S-transferase A3 from Homo sapiens (Human).